A 389-amino-acid chain; its full sequence is Indole-3-acetate monooxygenase (389 aa).

Belongs to the HpaH/HsaA monooxygenase family.

It catalyses the reaction (indol-3-yl)acetate + NADH + O2 + H(+) = 2-hydroxy-(1H-indol-3-yl)acetate + NAD(+) + H2O. The enzyme catalyses indole + NADH + O2 + H(+) = indoxyl + NAD(+) + H2O. In terms of biological role, involved in the degradation of the plant hormone indole-3-acetic acid (IAA). Catalyzes the first step of the pathway, the conversion of IAA to 2-hydroxy-IAA (2-OH-IAA). Can also convert indole to indoxyl, which spontaneously dimerizes in the presence of oxygen to form the blue pigment indigo. This is Indole-3-acetate monooxygenase from Pseudomonas putida (Arthrobacter siderocapsulatus).